We begin with the raw amino-acid sequence, 217 residues long: Probable transaldolase (217 aa).

Lys-83 (schiff-base intermediate with substrate) is an active-site residue.

It belongs to the transaldolase family. Type 3B subfamily.

The protein resides in the cytoplasm. The catalysed reaction is D-sedoheptulose 7-phosphate + D-glyceraldehyde 3-phosphate = D-erythrose 4-phosphate + beta-D-fructose 6-phosphate. The protein operates within carbohydrate degradation; pentose phosphate pathway; D-glyceraldehyde 3-phosphate and beta-D-fructose 6-phosphate from D-ribose 5-phosphate and D-xylulose 5-phosphate (non-oxidative stage): step 2/3. Functionally, transaldolase is important for the balance of metabolites in the pentose-phosphate pathway. In Caulobacter vibrioides (strain NA1000 / CB15N) (Caulobacter crescentus), this protein is Probable transaldolase.